A 366-amino-acid chain; its full sequence is Succinyl-diaminopimelate desuccinylase (366 aa).

Position 66 (histidine 66) interacts with Zn(2+). Aspartate 68 is a catalytic residue. Aspartate 97 serves as a coordination point for Zn(2+). Glutamate 127 functions as the Proton acceptor in the catalytic mechanism. Zn(2+) is bound by residues glutamate 128, glutamate 156, and histidine 341.

Belongs to the peptidase M20A family. DapE subfamily. In terms of assembly, homodimer. Zn(2+) serves as cofactor. Requires Co(2+) as cofactor.

The catalysed reaction is N-succinyl-(2S,6S)-2,6-diaminopimelate + H2O = (2S,6S)-2,6-diaminopimelate + succinate. It functions in the pathway amino-acid biosynthesis; L-lysine biosynthesis via DAP pathway; LL-2,6-diaminopimelate from (S)-tetrahydrodipicolinate (succinylase route): step 3/3. Functionally, catalyzes the hydrolysis of N-succinyl-L,L-diaminopimelic acid (SDAP), forming succinate and LL-2,6-diaminopimelate (DAP), an intermediate involved in the bacterial biosynthesis of lysine and meso-diaminopimelic acid, an essential component of bacterial cell walls. The polypeptide is Succinyl-diaminopimelate desuccinylase (Aliarcobacter butzleri (strain RM4018) (Arcobacter butzleri)).